Reading from the N-terminus, the 137-residue chain is Small ribosomal subunit protein uS12 (137 aa).

Residues 1-55 (MPTINQLVRKPRKSKTKQSDSPALNRGFNSKKKQFTNLNSPQKRGVCTRVGTMTP) are disordered. Aspartate 102 bears the 3-methylthioaspartic acid mark. Positions 118-137 (SGVDGRRQGRSLYGTKKPKN) are disordered.

It belongs to the universal ribosomal protein uS12 family. Part of the 30S ribosomal subunit. Contacts proteins S8 and S17. May interact with IF1 in the 30S initiation complex.

Functionally, with S4 and S5 plays an important role in translational accuracy. Interacts with and stabilizes bases of the 16S rRNA that are involved in tRNA selection in the A site and with the mRNA backbone. Located at the interface of the 30S and 50S subunits, it traverses the body of the 30S subunit contacting proteins on the other side and probably holding the rRNA structure together. The combined cluster of proteins S8, S12 and S17 appears to hold together the shoulder and platform of the 30S subunit. The protein is Small ribosomal subunit protein uS12 of Staphylococcus epidermidis (strain ATCC 35984 / DSM 28319 / BCRC 17069 / CCUG 31568 / BM 3577 / RP62A).